The sequence spans 232 residues: Biosynthetic peptidoglycan transglycosylase (232 aa).

Residues 14-34 (AAVALVLLYQLWIFAHVLWWI) form a helical membrane-spanning segment.

Belongs to the glycosyltransferase 51 family.

Its subcellular location is the cell inner membrane. The enzyme catalyses [GlcNAc-(1-&gt;4)-Mur2Ac(oyl-L-Ala-gamma-D-Glu-L-Lys-D-Ala-D-Ala)](n)-di-trans,octa-cis-undecaprenyl diphosphate + beta-D-GlcNAc-(1-&gt;4)-Mur2Ac(oyl-L-Ala-gamma-D-Glu-L-Lys-D-Ala-D-Ala)-di-trans,octa-cis-undecaprenyl diphosphate = [GlcNAc-(1-&gt;4)-Mur2Ac(oyl-L-Ala-gamma-D-Glu-L-Lys-D-Ala-D-Ala)](n+1)-di-trans,octa-cis-undecaprenyl diphosphate + di-trans,octa-cis-undecaprenyl diphosphate + H(+). The protein operates within cell wall biogenesis; peptidoglycan biosynthesis. Peptidoglycan polymerase that catalyzes glycan chain elongation from lipid-linked precursors. The sequence is that of Biosynthetic peptidoglycan transglycosylase from Thiobacillus denitrificans (strain ATCC 25259 / T1).